Reading from the N-terminus, the 294-residue chain is Glycine--tRNA ligase alpha subunit (294 aa).

This sequence belongs to the class-II aminoacyl-tRNA synthetase family. Tetramer of two alpha and two beta subunits.

It localises to the cytoplasm. It catalyses the reaction tRNA(Gly) + glycine + ATP = glycyl-tRNA(Gly) + AMP + diphosphate. In Sulfurovum sp. (strain NBC37-1), this protein is Glycine--tRNA ligase alpha subunit.